We begin with the raw amino-acid sequence, 607 residues long: DNA mismatch repair protein MutL (607 aa).

This sequence belongs to the DNA mismatch repair MutL/HexB family.

Functionally, this protein is involved in the repair of mismatches in DNA. It is required for dam-dependent methyl-directed DNA mismatch repair. May act as a 'molecular matchmaker', a protein that promotes the formation of a stable complex between two or more DNA-binding proteins in an ATP-dependent manner without itself being part of a final effector complex. The sequence is that of DNA mismatch repair protein MutL from Gemmatimonas aurantiaca (strain DSM 14586 / JCM 11422 / NBRC 100505 / T-27).